Consider the following 248-residue polypeptide: Putative glutamine amidotransferase-like protein C13C5.04 (248 aa).

Residues 13-217 (PMVEITSAYG…VKVLRGTEVF (205 aa)) enclose the Glutamine amidotransferase type-1 domain.

The protein is Putative glutamine amidotransferase-like protein C13C5.04 of Schizosaccharomyces pombe (strain 972 / ATCC 24843) (Fission yeast).